The following is a 410-amino-acid chain: MRRPQLLDRRWLTIILRSLRELIQRFDAHDGLKTASALTYTTLFAVVPFMTVLYAMLSAIPSFQGISEQLQALIFSQFVPATGSALVEHLRDFSRQARSLTLIGLMFLLVTAVMMMVTVERAFNNIWHVSRSRRGVSSFLLYWAVLTLGPLLLGSGFLLSSYLASLTLVRGAAEVLGGPVAFLRLLPLTLSFTAFVFIYMAVPNCRVRFRHAVAGAGLAALALELAKGAFSLYVTYFPSYQVIYGTFAAVPLFLVWVFLSWAIVLVGAELAAWLGERRRAEWRYWAPFWQALGVVSHLYDAHRRGQAVYDRELAMRLGARYSDVMAPLQTLGVAVQLDNDRWMLGRDLGALSLWDFQRAMPWAVPLGESSPAPEMQAIHAALQEAERHRQQVLTQPMEHLLAEGARNDSP.

Transmembrane regions (helical) follow at residues 43 to 63 (LFAVVPFMTVLYAMLSAIPSF), 99 to 119 (SLTLIGLMFLLVTAVMMMVTV), 139 to 159 (FLLYWAVLTLGPLLLGSGFLL), 180 to 200 (VAFLRLLPLTLSFTAFVFIYM), 212 to 232 (AVAGAGLAALALELAKGAFSL), and 247 to 267 (FAAVPLFLVWVFLSWAIVLVG).

The protein belongs to the UPF0761 family.

The protein localises to the cell inner membrane. This Chromohalobacter salexigens (strain ATCC BAA-138 / DSM 3043 / CIP 106854 / NCIMB 13768 / 1H11) protein is UPF0761 membrane protein Csal_1895.